Consider the following 428-residue polypeptide: Adenylosuccinate synthetase (428 aa).

Residues 12–18 (GDEGKGK) and 40–42 (GHT) contribute to the GTP site. D13 acts as the Proton acceptor in catalysis. D13 and G40 together coordinate Mg(2+). Residues 13–16 (DEGK), 38–41 (NAGH), T130, R144, Q225, T240, and R304 each bind IMP. H41 (proton donor) is an active-site residue. Residue 300–306 (VTTGRAR) participates in substrate binding. Residues R306, 332–334 (KID), and 414–416 (SVG) contribute to the GTP site.

It belongs to the adenylosuccinate synthetase family. Homodimer. Requires Mg(2+) as cofactor.

It localises to the cytoplasm. It carries out the reaction IMP + L-aspartate + GTP = N(6)-(1,2-dicarboxyethyl)-AMP + GDP + phosphate + 2 H(+). Its pathway is purine metabolism; AMP biosynthesis via de novo pathway; AMP from IMP: step 1/2. In terms of biological role, plays an important role in the de novo pathway of purine nucleotide biosynthesis. Catalyzes the first committed step in the biosynthesis of AMP from IMP. This Clostridium kluyveri (strain ATCC 8527 / DSM 555 / NBRC 12016 / NCIMB 10680 / K1) protein is Adenylosuccinate synthetase.